Reading from the N-terminus, the 77-residue chain is Apelin (77 aa).

Residues 1–22 (MNLSFCVQALLLLWLSLTAVCG) form the signal peptide. Residues 23–41 (VPLMLPPDGKGLEEGNMRY) constitute a propeptide that is removed on maturation. Residues 45–77 (PRTSRTGPGAWQGGRRKFRRQRPRLSHKGPMPF) are disordered. Residues 58–71 (GRRKFRRQRPRLSH) show a composition bias toward basic residues.

Belongs to the apelin family. Several active peptides may be produced by proteolytic processing of the peptide precursor. As to expression, expressed in the lung, testis, ovary, uterus and mammary gland. Expressed in neurons in the thalamic paraventricular and hypothalamic supraoptic nuclei. The lung, testis and uterus mainly contain a large form that looks like apelin-36, whereas the mammary gland seems to contain 2 forms of apelin, a large form close to apelin-36 and a small form close to apelin-13 (at protein level). Widely expressed in the adult, with highest levels in the mammary gland of lactating animals, very high levels in the lung, intermediate levels in the spinal cord, ovary, adipose tissue, brain (neuronal cell bodies and fibers in the supraoptic and the paraventricular nuclei), heart and testis, and lowest levels in the pituitary gland, kidney, stomach, uterus and pancreas.

Its subcellular location is the secreted. The protein resides in the extracellular space. Peptide hormone that functions as endogenous ligand for the G-protein-coupled apelin receptor (APLNR/APJ), that plays a role in cadiovascular homeostasis. Functions as a balanced agonist activating both G(i) protein pathway and beta-arrestin pathway of APLNR. Downstream G proteins activation, apelin can inhibit cAMP production and activate key intracellular effectors such as ERKs. On the other hand, APLNR activation induces beta-arrestin recruitment to the membrane leading to desensitization and internalization of the receptor. Apelin blunts cardiac hypertrophic induction from APLNR on response to pathological stimuli, but also induces myocardial hypertrophy under normal conditions. Apelin-36 dissociates more hardly than (pyroglu)apelin-13 from APLNR. Involved in the regulation of cardiac precursor cell movements during gastrulation and heart morphogenesis. Has an inhibitory effect on cytokine production in response to T-cell receptor/CD3 cross-linking; the oral intake of apelin in the colostrum and the milk might therefore modulate immune responses in neonates. Plays a role in early coronary blood vessels formation. Mediates myocardial contractility in an ERK1/2-dependent manner. May also have a role in the central control of body fluid homeostasis by influencing vasopressin release and drinking behavior. This Rattus norvegicus (Rat) protein is Apelin.